We begin with the raw amino-acid sequence, 34 residues long: MINWQVLGQLIATGTIMLAGPAVIVLLALKKGNL.

The chain crosses the membrane as a helical span at residues 9-29; that stretch reads QLIATGTIMLAGPAVIVLLAL.

Belongs to the Psb30/Ycf12 family. PSII is composed of 1 copy each of membrane proteins PsbA, PsbB, PsbC, PsbD, PsbE, PsbF, PsbH, PsbI, PsbJ, PsbK, PsbL, PsbM, PsbT, PsbX, PsbY, PsbZ, Psb30/Ycf12, peripheral proteins of the oxygen-evolving complex and a large number of cofactors. It forms dimeric complexes.

The protein localises to the plastid. Its subcellular location is the chloroplast thylakoid membrane. A core subunit of photosystem II (PSII), probably helps stabilize the reaction center. The chain is Photosystem II reaction center protein Psb30 from Phaeodactylum tricornutum (strain CCAP 1055/1).